Consider the following 174-residue polypeptide: Peptide deformylase (174 aa).

2 residues coordinate Fe cation: Cys96 and His138. Glu139 is a catalytic residue. Residue His142 coordinates Fe cation.

It belongs to the polypeptide deformylase family. Fe(2+) serves as cofactor.

It catalyses the reaction N-terminal N-formyl-L-methionyl-[peptide] + H2O = N-terminal L-methionyl-[peptide] + formate. Removes the formyl group from the N-terminal Met of newly synthesized proteins. Requires at least a dipeptide for an efficient rate of reaction. N-terminal L-methionine is a prerequisite for activity but the enzyme has broad specificity at other positions. This Helicobacter pylori (strain J99 / ATCC 700824) (Campylobacter pylori J99) protein is Peptide deformylase.